A 975-amino-acid polypeptide reads, in one-letter code: Probable ATP-dependent RNA helicase CG8611 (975 aa).

Residues 1 to 24 show a composition bias toward polar residues; that stretch reads MVENISLNVTVKSSARKNQQQSPA. 3 disordered regions span residues 1–38, 50–104, and 127–295; these read MVEN…QDFD, AIVV…DDLM, and TTKP…FRTK. Residues 64 to 94 show a composition bias toward low complexity; that stretch reads PTNSSVPNTTKSPTPSVSSSKSAISTLSASP. Phosphoserine is present on residues serine 75 and serine 99. The span at 190–203 shows a compositional bias: basic and acidic residues; that stretch reads QLEEERRQKRREEG. 3 positions are modified to phosphoserine: serine 210, serine 220, and serine 224. Positions 242–261 are enriched in acidic residues; the sequence is IEDSGESGEESATSDEEPDE. The segment covering 269–285 has biased composition (basic and acidic residues); the sequence is QEKEPKQTAKKPPKAEE. A Q motif motif is present at residues 327–356; that stretch reads SKISTLGLHPHAVKNLEDLLSIRELTSVQQ. A Helicase ATP-binding domain is found at 359–548; the sequence is IPEVLQGKDV…GLTLKNPLYI (190 aa). An ATP-binding site is contributed by 372–379; it reads SQTGSGKT. The DEAD box motif lies at 485-488; it reads DEAD. Positions 616-789 constitute a Helicase C-terminal domain; that stretch reads LLAKEVDASP…DMYAYLQTLL (174 aa). Serine 667 carries the post-translational modification Phosphoserine. Disordered regions lie at residues 915 to 942 and 955 to 975; these read LQQR…VGRS and NMSE…RKQA.

It belongs to the DEAD box helicase family. DDX31/DBP7 subfamily.

It carries out the reaction ATP + H2O = ADP + phosphate + H(+). Functionally, probable ATP-dependent RNA helicase. The chain is Probable ATP-dependent RNA helicase CG8611 from Drosophila melanogaster (Fruit fly).